Here is a 270-residue protein sequence, read N- to C-terminus: Interleukin-1 alpha (270 aa).

A propeptide spanning residues 1–114 (MAKVPDLFED…HDLEETIQPR (114 aa)) is cleaved from the precursor. Residue Asn46 is glycosylated (N-linked (GlcNAc...) asparagine). An N6-acetyllysine modification is found at Lys85. Residues 85-89 (KKRRL) form a nuclear localization signal (NLS) region. Ser90 carries the post-translational modification Phosphoserine. A glycan (N-linked (GlcNAc...) asparagine) is linked at Asn139.

Belongs to the IL-1 family. In terms of assembly, monomer. Interacts with TMED10; the interaction mediates the translocation from the cytoplasm into the ERGIC (endoplasmic reticulum-Golgi intermediate compartment) and thereby secretion. Interacts with IL1R1. Interacts with S100A13; this interaction is the first step in the export of IL1A, followed by direct translocation of this complex across the plasma membrane. Post-translationally, acetylated within its nuclear localization sequence, which impacts subcellular localization. In terms of processing, proteolytic processed by CAPN1 in a calcium-dependent manner. Cleavage from 31 kDa precursor to 18 kDa biologically active molecules. Phosphorylated. Phosphorylation greatly enhances susceptibility to digestion and promotes the conversion of pre-IL1A alpha to the biologically active IL1A.

The protein localises to the nucleus. The protein resides in the cytoplasm. It is found in the secreted. Functionally, cytokine constitutively present intracellularly in nearly all resting non-hematopoietic cells that plays an important role in inflammation and bridges the innate and adaptive immune systems. After binding to its receptor IL1R1 together with its accessory protein IL1RAP, forms the high affinity interleukin-1 receptor complex. Signaling involves the recruitment of adapter molecules such as MYD88, IRAK1 or IRAK4. In turn, mediates the activation of NF-kappa-B and the three MAPK pathways p38, p42/p44 and JNK pathways. Within the cell, acts as an alarmin and cell death results in its liberation in the extracellular space after disruption of the cell membrane to induce inflammation and alert the host to injury or damage. In addition to its role as a danger signal, which occurs when the cytokine is passively released by cell necrosis, directly senses DNA damage and acts as signal for genotoxic stress without loss of cell integrity. The polypeptide is Interleukin-1 alpha (Rattus norvegicus (Rat)).